A 115-amino-acid chain; its full sequence is Non-specific lipid-transfer protein 4.1 (115 aa).

The first 25 residues, 1–25, serve as a signal peptide directing secretion; it reads MARAAASQLVLVALVAAMLLVAADA. 4 disulfide bridges follow: cysteine 29–cysteine 77, cysteine 39–cysteine 54, cysteine 55–cysteine 97, and cysteine 75–cysteine 111.

This sequence belongs to the plant LTP family.

Functionally, plant non-specific lipid-transfer proteins transfer phospholipids as well as galactolipids across membranes. May play a role in wax or cutin deposition in the cell walls of expanding epidermal cells and certain secretory tissues. This Hordeum vulgare (Barley) protein is Non-specific lipid-transfer protein 4.1 (LTP4.1).